The sequence spans 95 residues: Aspartyl/glutamyl-tRNA(Asn/Gln) amidotransferase subunit C (95 aa).

It belongs to the GatC family. Heterotrimer of A, B and C subunits.

It catalyses the reaction L-glutamyl-tRNA(Gln) + L-glutamine + ATP + H2O = L-glutaminyl-tRNA(Gln) + L-glutamate + ADP + phosphate + H(+). The enzyme catalyses L-aspartyl-tRNA(Asn) + L-glutamine + ATP + H2O = L-asparaginyl-tRNA(Asn) + L-glutamate + ADP + phosphate + 2 H(+). In terms of biological role, allows the formation of correctly charged Asn-tRNA(Asn) or Gln-tRNA(Gln) through the transamidation of misacylated Asp-tRNA(Asn) or Glu-tRNA(Gln) in organisms which lack either or both of asparaginyl-tRNA or glutaminyl-tRNA synthetases. The reaction takes place in the presence of glutamine and ATP through an activated phospho-Asp-tRNA(Asn) or phospho-Glu-tRNA(Gln). The polypeptide is Aspartyl/glutamyl-tRNA(Asn/Gln) amidotransferase subunit C (Rhodospirillum centenum (strain ATCC 51521 / SW)).